Consider the following 623-residue polypeptide: tRNA uridine 5-carboxymethylaminomethyl modification enzyme MnmG (623 aa).

An FAD-binding site is contributed by Gly10–Gly15. Gly269–Phe283 is a binding site for NAD(+).

This sequence belongs to the MnmG family. As to quaternary structure, homodimer. Heterotetramer of two MnmE and two MnmG subunits. It depends on FAD as a cofactor.

Its subcellular location is the cytoplasm. Functionally, NAD-binding protein involved in the addition of a carboxymethylaminomethyl (cmnm) group at the wobble position (U34) of certain tRNAs, forming tRNA-cmnm(5)s(2)U34. The sequence is that of tRNA uridine 5-carboxymethylaminomethyl modification enzyme MnmG from Rhizobium meliloti (strain 1021) (Ensifer meliloti).